Here is an 89-residue protein sequence, read N- to C-terminus: Small ribosomal subunit protein uS17 (89 aa).

The protein belongs to the universal ribosomal protein uS17 family. As to quaternary structure, part of the 30S ribosomal subunit.

In terms of biological role, one of the primary rRNA binding proteins, it binds specifically to the 5'-end of 16S ribosomal RNA. This is Small ribosomal subunit protein uS17 from Coxiella burnetii (strain RSA 493 / Nine Mile phase I).